The chain runs to 484 residues: tRNA sulfurtransferase (484 aa).

The THUMP domain maps to 62-166 (GPVIDELVRI…DDSYHIAHRR (105 aa)). Residues 184-185 (LI), K266, G288, and Q297 contribute to the ATP site. A disulfide bridge links C345 with C456. Positions 404 to 482 (PSVDDVIIDV…GHGNIKVYAP (79 aa)) constitute a Rhodanese domain. C456 functions as the Cysteine persulfide intermediate in the catalytic mechanism.

Belongs to the ThiI family.

The protein localises to the cytoplasm. The catalysed reaction is [ThiI sulfur-carrier protein]-S-sulfanyl-L-cysteine + a uridine in tRNA + 2 reduced [2Fe-2S]-[ferredoxin] + ATP + H(+) = [ThiI sulfur-carrier protein]-L-cysteine + a 4-thiouridine in tRNA + 2 oxidized [2Fe-2S]-[ferredoxin] + AMP + diphosphate. It carries out the reaction [ThiS sulfur-carrier protein]-C-terminal Gly-Gly-AMP + S-sulfanyl-L-cysteinyl-[cysteine desulfurase] + AH2 = [ThiS sulfur-carrier protein]-C-terminal-Gly-aminoethanethioate + L-cysteinyl-[cysteine desulfurase] + A + AMP + 2 H(+). It functions in the pathway cofactor biosynthesis; thiamine diphosphate biosynthesis. Catalyzes the ATP-dependent transfer of a sulfur to tRNA to produce 4-thiouridine in position 8 of tRNAs, which functions as a near-UV photosensor. Also catalyzes the transfer of sulfur to the sulfur carrier protein ThiS, forming ThiS-thiocarboxylate. This is a step in the synthesis of thiazole, in the thiamine biosynthesis pathway. The sulfur is donated as persulfide by IscS. The chain is tRNA sulfurtransferase from Marinobacter nauticus (strain ATCC 700491 / DSM 11845 / VT8) (Marinobacter aquaeolei).